A 310-amino-acid chain; its full sequence is Proline iminopeptidase (310 aa).

The 258-residue stretch at 33–290 (PVIFLHGGPG…RVVQAGHRAF (258 aa)) folds into the AB hydrolase-1 domain. Ser-107 acts as the Nucleophile in catalysis. Residue Asp-260 is part of the active site. The Proton donor role is filled by His-287.

This sequence belongs to the peptidase S33 family.

It localises to the cytoplasm. It carries out the reaction Release of N-terminal proline from a peptide.. Functionally, specifically catalyzes the removal of N-terminal proline residues from peptides. The protein is Proline iminopeptidase (pip) of Neisseria meningitidis serogroup B (strain ATCC BAA-335 / MC58).